The chain runs to 122 residues: Protein preY, mitochondrial (122 aa).

A mitochondrion-targeting transit peptide spans 1-40; it reads MLAVRAWGRTYNTLVQRKLNAACPTGALPAVTLRPLHCSL. The TRM112 domain occupies 56 to 102; sequence DPTLLQFLVCPLSRKSLRYEESTNELINDELGIAYPIVDGIPNMIPQ.

The protein belongs to the PREY family.

The protein resides in the mitochondrion. Its function is as follows. In mitochondria, S-adenosylmethionine-dependent methyltransferase chaperone that supports both coenzyme Q biosynthesis and NADH:ubiquinone oxidoreductase complex (complex I, MT-ND1) assembly. This is Protein preY, mitochondrial (pyurf) from Xenopus tropicalis (Western clawed frog).